Reading from the N-terminus, the 87-residue chain is uncharacterized protein (87 aa).

To A.fulgidus AF_0255 and AF_1348.

This is an uncharacterized protein from Archaeoglobus fulgidus (strain ATCC 49558 / DSM 4304 / JCM 9628 / NBRC 100126 / VC-16).